Consider the following 105-residue polypeptide: Nucleoid-associated protein OCAR_7544/OCA5_c05960 (105 aa).

It belongs to the YbaB/EbfC family. In terms of assembly, homodimer.

The protein localises to the cytoplasm. It localises to the nucleoid. Functionally, binds to DNA and alters its conformation. May be involved in regulation of gene expression, nucleoid organization and DNA protection. This chain is Nucleoid-associated protein OCAR_7544/OCA5_c05960, found in Afipia carboxidovorans (strain ATCC 49405 / DSM 1227 / KCTC 32145 / OM5) (Oligotropha carboxidovorans).